The primary structure comprises 453 residues: Enolase (453 aa).

Q163 is a (2R)-2-phosphoglycerate binding site. The active-site Proton donor is the E205. Residues D258, E308, and D335 each coordinate Mg(2+). Residues K360, R389, S390, and K411 each contribute to the (2R)-2-phosphoglycerate site. K360 functions as the Proton acceptor in the catalytic mechanism.

It belongs to the enolase family. Mg(2+) serves as cofactor.

The protein localises to the cytoplasm. Its subcellular location is the secreted. It is found in the cell surface. It catalyses the reaction (2R)-2-phosphoglycerate = phosphoenolpyruvate + H2O. Its pathway is carbohydrate degradation; glycolysis; pyruvate from D-glyceraldehyde 3-phosphate: step 4/5. Catalyzes the reversible conversion of 2-phosphoglycerate (2-PG) into phosphoenolpyruvate (PEP). It is essential for the degradation of carbohydrates via glycolysis. This chain is Enolase, found in Mesoplasma florum (strain ATCC 33453 / NBRC 100688 / NCTC 11704 / L1) (Acholeplasma florum).